A 72-amino-acid polypeptide reads, in one-letter code: UPF0270 protein YheU (72 aa).

This sequence belongs to the UPF0270 family.

This chain is UPF0270 protein YheU, found in Salmonella choleraesuis (strain SC-B67).